The following is a 207-amino-acid chain: MLEHFRAGWAKVMNPIADALLRAHVTPDVVTWIGTIGAVLMALICFPQGWLWQGPWLVTLFIFSDSLDGNMARKLGRHSQWGSFLDSTLDRFGDAAIFTGVALYFAGPGNSVLWTAMACAALVFGMATSYVRAKAESLALEAKVGIATRADRLLVSLVAIEITGLARVGAFPHWCVVALPIALCYLTLAGAITVVQRMVAVRRACES.

2 helical membrane passes run 21 to 44 (LRAH…MALI) and 50 to 67 (WLWQ…SDSL). 28 to 31 (DVVT) lines the a CDP-1,2-diacyl-sn-glycerol pocket. 2 residues coordinate Mg(2+): Asp65 and Asp68. A CDP-1,2-diacyl-sn-glycerol is bound by residues Gly69, Arg73, and Ser79. The Mg(2+) site is built by Asp86 and Asp90. 4 helical membrane-spanning segments follow: residues 88 to 106 (TLDR…LYFA), 112 to 131 (VLWT…TSYV), 152 to 170 (RLLV…RVGA), and 176 to 195 (VVAL…ITVV). Asp90 serves as the catalytic Proton acceptor.

It belongs to the CDP-alcohol phosphatidyltransferase class-I family. As to quaternary structure, homodimer. Requires Mg(2+) as cofactor.

The protein localises to the cell membrane. The enzyme catalyses a CDP-1,2-diacyl-sn-glycerol + 1D-myo-inositol 3-phosphate = a 1,2-diacyl-sn-glycero-3-phospho-(1D-myo-inositol-3-phosphate) + CMP + H(+). The catalysed reaction is 1,2-di-(9Z-octadecenoyl)-sn-glycero-3-cytidine-5'-diphosphate + 1D-myo-inositol 3-phosphate = 1,2-di-(9Z-octadecenoyl)-sn-glycero-3-phospho-(1D-myo-inositol-3-phosphate) + CMP + H(+). The protein operates within phospholipid metabolism; phosphatidylinositol phosphate biosynthesis. In terms of biological role, catalyzes the conjugation of the 1'-hydroxyl group of D-myo-inositol-3-phosphate (also named L-myo-inositol-1-phosphate) with a lipid tail of cytidine diphosphate diacylglycerol (CDP-DAG), forming phosphatidylinositol phosphate (PIP) and CMP. PIP is a precursor of phosphatidylinositol (PI) which is an essential lipid required for cell wall formation. The polypeptide is Phosphatidylinositol phosphate synthase (Cutibacterium acnes (strain DSM 16379 / KPA171202) (Propionibacterium acnes)).